The chain runs to 138 residues: Cysteine desulfuration protein SufE (138 aa).

The Cysteine persulfide intermediate role is filled by cysteine 51.

It belongs to the SufE family. As to quaternary structure, homodimer. Interacts with SufS.

It is found in the cytoplasm. It participates in cofactor biosynthesis; iron-sulfur cluster biosynthesis. Participates in cysteine desulfuration mediated by SufS. Cysteine desulfuration mobilizes sulfur from L-cysteine to yield L-alanine and constitutes an essential step in sulfur metabolism for biosynthesis of a variety of sulfur-containing biomolecules. Functions as a sulfur acceptor for SufS, by mediating the direct transfer of the sulfur atom from the S-sulfanylcysteine of SufS, an intermediate product of cysteine desulfuration process. The protein is Cysteine desulfuration protein SufE of Salmonella dublin (strain CT_02021853).